The sequence spans 184 residues: Shikimate kinase (184 aa).

Glycine 18 to threonine 23 is an ATP binding site. Threonine 22 contacts Mg(2+). The substrate site is built by aspartate 40, arginine 64, and glycine 86. Residue arginine 124 participates in ATP binding. Residue arginine 143 coordinates substrate. Glutamine 160 is a binding site for ATP.

This sequence belongs to the shikimate kinase family. In terms of assembly, monomer. The cofactor is Mg(2+).

Its subcellular location is the cytoplasm. It carries out the reaction shikimate + ATP = 3-phosphoshikimate + ADP + H(+). Its pathway is metabolic intermediate biosynthesis; chorismate biosynthesis; chorismate from D-erythrose 4-phosphate and phosphoenolpyruvate: step 5/7. Functionally, catalyzes the specific phosphorylation of the 3-hydroxyl group of shikimic acid using ATP as a cosubstrate. This chain is Shikimate kinase, found in Chromobacterium violaceum (strain ATCC 12472 / DSM 30191 / JCM 1249 / CCUG 213 / NBRC 12614 / NCIMB 9131 / NCTC 9757 / MK).